Reading from the N-terminus, the 150-residue chain is Urease accessory protein UreE (150 aa).

This sequence belongs to the UreE family.

It is found in the cytoplasm. Functionally, involved in urease metallocenter assembly. Binds nickel. Probably functions as a nickel donor during metallocenter assembly. The protein is Urease accessory protein UreE of Staphylococcus aureus (strain Mu3 / ATCC 700698).